Reading from the N-terminus, the 531-residue chain is Doublesex- and mab-3-related transcription factor A2 (531 aa).

A DNA-binding region (DM) is located at residues 69-116 (CARCRNHGVVSALKGHKRYCRWKDCLCAKCTLIAERQRVMAAQVALRR). The segment at 197–312 (LQAGRPDSPQ…GGPGPRQRTP (116 aa)) is disordered. Over residues 274–285 (PGSSSPLGSESG) the composition is skewed to low complexity. One can recognise a DMA domain in the interval 310–345 (RTPLDILTRVFPGHRRGVLELVLQGCGGDVVQAIEQ).

This sequence belongs to the DMRT family. In terms of tissue distribution, expressed in adult brain and testis, as well as in embryonic ovary, kidney, heart, lung, stomach and brain.

Its subcellular location is the nucleus. May be involved in sexual development. The sequence is that of Doublesex- and mab-3-related transcription factor A2 (Dmrta2) from Mus musculus (Mouse).